The primary structure comprises 285 residues: MPKNFASDCPGESTLFLRKYQMSVQEKRSSSHLYYIPPWHLDRKYGSCSTILLDNSTASQPDLRHTLESVALAIYYNIKHRYANRSLAIFEEPVHPLPQEKLPGKSFKHDPKRNCIFRHFCTLFQVIKLTAPCAIVALVYIKRLLTSANIDLCPTNWKKIVLGTMLLASKVWRNHGLWSVDDSQNSKDTAVENMSKMEKCFLELLEFNIHVSASVYAKYYFDLCALANDHDLYFLFSFLHKDKAQKLEAMSRLCEYKDLHQDAAALKRVISMNFIGIGCSNAILS.

Residues 111 to 209 form the Cyclin N-terminal domain; that stretch reads PKRNCIFRHF…CFLELLEFNI (99 aa).

Belongs to the cyclin family. Cyclin Y subfamily.

In Homo sapiens (Human), this protein is Cyclin-Y-like protein 1B.